The following is a 390-amino-acid chain: Transposase for insertion sequence element IS21 (390 aa).

The HTH IS21-type domain maps to 5–66 (EDFYMIKQMR…PFMDYIDMRL (62 aa)). Residues 20–39 (IVDIATQIGCSERTVRRYLK) constitute a DNA-binding region (H-T-H motif). One can recognise an Integrase catalytic domain in the interval 111–285 (FETQPRYQLQ…TPEQRFALEQ (175 aa)).

This sequence belongs to the transposase IS21/IS408/IS1162 family.

In terms of biological role, involved in the transposition of the insertion sequence. The sequence is that of Transposase for insertion sequence element IS21 (istA) from Pseudomonas aeruginosa.